Consider the following 190-residue polypeptide: Nodulation protein L (190 aa).

The protein belongs to the transferase hexapeptide repeat family.

Its function is as follows. Acetyltransferase implicated in the O-acetylation of Nod factors. The protein is Nodulation protein L (nodL) of Rhizobium leguminosarum bv. viciae.